A 367-amino-acid chain; its full sequence is Sigma54-dependent transcriptional regulator SfnR (367 aa).

A Sigma-54 factor interaction domain is found at 21 to 250; it reads QVFEDPKSQA…LENVIHHTLL (230 aa). Residues 49-56 and 112-121 each bind ATP; these read GETGTGKE and ADGGTLFLDE.

Involved in the dimethyl sulfide degradation pathway. Activates the expression of sfnG and sfnF. The polypeptide is Sigma54-dependent transcriptional regulator SfnR (Pseudomonas fluorescens (strain Pf0-1)).